The following is a 176-amino-acid chain: Large ribosomal subunit protein eL20 (176 aa).

Lys-11 participates in a covalent cross-link: Glycyl lysine isopeptide (Lys-Gly) (interchain with G-Cter in SUMO2). Tyr-63 bears the Phosphotyrosine mark. Ser-71 bears the Phosphoserine mark. Lys-76 is subject to N6-succinyllysine. Position 123 is a phosphoserine (Ser-123). Glycyl lysine isopeptide (Lys-Gly) (interchain with G-Cter in SUMO2) cross-links involve residues Lys-128 and Lys-170.

Belongs to the eukaryotic ribosomal protein eL20 family. As to quaternary structure, component of the large ribosomal subunit. Binds IPO9 with high affinity.

It localises to the cytoplasm. Component of the large ribosomal subunit. The ribosome is a large ribonucleoprotein complex responsible for the synthesis of proteins in the cell. This chain is Large ribosomal subunit protein eL20 (Rpl18a), found in Mus musculus (Mouse).